The following is a 350-amino-acid chain: Biotin synthase (350 aa).

In terms of domain architecture, Radical SAM core spans 38 to 265; sequence NHVQVSTLLS…MSAVRLSAGR (228 aa). 3 residues coordinate [4Fe-4S] cluster: C53, C57, and C60. The [2Fe-2S] cluster site is built by C97, C128, C188, and R260.

This sequence belongs to the radical SAM superfamily. Biotin synthase family. Homodimer. It depends on [4Fe-4S] cluster as a cofactor. [2Fe-2S] cluster serves as cofactor.

The enzyme catalyses (4R,5S)-dethiobiotin + (sulfur carrier)-SH + 2 reduced [2Fe-2S]-[ferredoxin] + 2 S-adenosyl-L-methionine = (sulfur carrier)-H + biotin + 2 5'-deoxyadenosine + 2 L-methionine + 2 oxidized [2Fe-2S]-[ferredoxin]. The protein operates within cofactor biosynthesis; biotin biosynthesis; biotin from 7,8-diaminononanoate: step 2/2. Its function is as follows. Catalyzes the conversion of dethiobiotin (DTB) to biotin by the insertion of a sulfur atom into dethiobiotin via a radical-based mechanism. This Vibrio atlanticus (strain LGP32) (Vibrio splendidus (strain Mel32)) protein is Biotin synthase.